The primary structure comprises 666 residues: Nuclear distribution protein nudE homolog 1 (666 aa).

The stretch at 14 to 195 (EEEIAHYREK…KDQLARAIAT (182 aa)) forms a coiled coil. Disordered regions lie at residues 40-64 (EFQQ…KQQA), 220-310 (DDIN…SGIP), 369-388 (KRVT…PAPH), and 397-666 (DHNT…KVKK). The segment covering 251–274 (RSGTMSSIPVASPSTKRFSQQIPH) has biased composition (polar residues). 2 stretches are compositionally biased toward low complexity: residues 275–287 (SPSF…STTS) and 372–383 (TSTTSTTSSTTT). The span at 400 to 410 (TTPTAQSQQFP) shows a compositional bias: polar residues. Low complexity-rich tracts occupy residues 449-465 (PTFR…LPSR), 473-485 (ASGS…SGTA), and 536-554 (SATP…STSN). Polar residues-rich tracts occupy residues 587–599 (RQSL…TPTT) and 614–638 (SSLS…SGRP).

The protein belongs to the nudE family. As to quaternary structure, self-associates. Interacts with PAC1.

Its subcellular location is the cytoplasm. It is found in the cytoskeleton. Required for nuclear migration. This Cryptococcus neoformans var. neoformans serotype D (strain B-3501A) (Filobasidiella neoformans) protein is Nuclear distribution protein nudE homolog 1 (NDE1).